The following is a 757-amino-acid chain: RNA-directed RNA polymerase catalytic subunit (757 aa).

The interval 50–82 (SEKGKWTTNTETGAPQLNPIDGPLPEDNEPSGY) is disordered. Residues 55–64 (WTTNTETGAP) show a composition bias toward polar residues. 2 short sequence motifs (nuclear localization signal) span residues 187–195 (RKRRVRDNM) and 203–216 (RTIGKKKQRVNKRS). The promoter-binding site stretch occupies residues 249-256 (RGFVYFVE). Residues 286–483 (VRKMMTNSQD…GINMSKKKSY (198 aa)) form the RdRp catalytic domain.

It belongs to the influenza viruses polymerase PB1 family. As to quaternary structure, influenza RNA polymerase is composed of three subunits: PB1, PB2 and PA. Interacts (via N-terminus) with PA (via C-terminus). Interacts (via C-terminus) with PB2 (via N-terminus); this interaction is essential for transcription initiation. In terms of processing, phosphorylated by host PRKCA.

It localises to the host nucleus. The protein localises to the host cytoplasm. The enzyme catalyses RNA(n) + a ribonucleoside 5'-triphosphate = RNA(n+1) + diphosphate. RNA-dependent RNA polymerase which is responsible for replication and transcription of virus RNA segments. The transcription of viral mRNAs occurs by a unique mechanism called cap-snatching. 5' methylated caps of cellular mRNAs are cleaved after 10-13 nucleotides by PA. In turn, these short capped RNAs are used as primers by PB1 for transcription of viral mRNAs. During virus replication, PB1 initiates RNA synthesis and copy vRNA into complementary RNA (cRNA) which in turn serves as a template for the production of more vRNAs. The polypeptide is RNA-directed RNA polymerase catalytic subunit (Influenza A virus (strain A/Memphis/110/1976 H3N2)).